The following is a 238-amino-acid chain: Large ribosomal subunit protein uL1 (238 aa).

Residues 217–238 (TNGPGVPVDETIQKNYADDAEA) are disordered.

This sequence belongs to the universal ribosomal protein uL1 family. Part of the 50S ribosomal subunit.

Functionally, binds directly to 23S rRNA. The L1 stalk is quite mobile in the ribosome, and is involved in E site tRNA release. In terms of biological role, protein L1 is also a translational repressor protein, it controls the translation of the L11 operon by binding to its mRNA. In Corynebacterium urealyticum (strain ATCC 43042 / DSM 7109), this protein is Large ribosomal subunit protein uL1.